Here is a 449-residue protein sequence, read N- to C-terminus: Probable glycine dehydrogenase (decarboxylating) subunit 1 (449 aa).

This sequence belongs to the GcvP family. N-terminal subunit subfamily. As to quaternary structure, the glycine cleavage system is composed of four proteins: P, T, L and H. In this organism, the P 'protein' is a heterodimer of two subunits.

The enzyme catalyses N(6)-[(R)-lipoyl]-L-lysyl-[glycine-cleavage complex H protein] + glycine + H(+) = N(6)-[(R)-S(8)-aminomethyldihydrolipoyl]-L-lysyl-[glycine-cleavage complex H protein] + CO2. In terms of biological role, the glycine cleavage system catalyzes the degradation of glycine. The P protein binds the alpha-amino group of glycine through its pyridoxal phosphate cofactor; CO(2) is released and the remaining methylamine moiety is then transferred to the lipoamide cofactor of the H protein. The protein is Probable glycine dehydrogenase (decarboxylating) subunit 1 of Rhodospirillum centenum (strain ATCC 51521 / SW).